A 252-amino-acid chain; its full sequence is Accessory gland protein Acp32CD (252 aa).

Positions 1 to 19 (MWRMRMRLLTGYLVLLALG) are cleaved as a signal peptide. Residues 42-252 (PDGEGGTGVD…GAKEDDYEEM (211 aa)) are disordered. Gly residues predominate over residues 44 to 69 (GEGGTGVDGGGGGAGGGAAGPGGGTG). Basic and acidic residues-rich tracts occupy residues 104–122 (AIGK…DSKD), 142–153 (SDSKDAKDRQDK), 159–171 (QEGK…HHSS), and 209–225 (NGAR…KEVA).

As to expression, seminal fluid.

The protein localises to the secreted. In terms of biological role, responsible for physiological and behavioral changes in mated female flies. This is Accessory gland protein Acp32CD (Acp32CD) from Drosophila melanogaster (Fruit fly).